The chain runs to 311 residues: Triacylglycerol lipase (311 aa).

The signal sequence occupies residues 1-26 (MKKKSLLPLGLAIGLASLAASPLIQA). The region spanning 35 to 280 (PIVLAHGMLG…DNYRMNHLDE (246 aa)) is the AB hydrolase-1 domain. Methionine 42 is a binding site for substrate. Residue serine 108 is the Nucleophile of the active site. Residue histidine 109 participates in substrate binding. A disulfide bridge links cysteine 209 with cysteine 261. Aspartate 235 contacts Ca(2+). Residues aspartate 255 and histidine 277 each act as charge relay system in the active site. Ca(2+) contacts are provided by aspartate 279, glutamine 283, and leucine 287.

Belongs to the AB hydrolase superfamily. Pseudomonas lipase family. As to quaternary structure, monomer. Requires Ca(2+) as cofactor.

It localises to the secreted. The catalysed reaction is a triacylglycerol + H2O = a diacylglycerol + a fatty acid + H(+). Na(+) increases lipase activity. Inhibited by diethyl p-nitrophenyl phosphate and 3,4-dichloroisocoumarin (DCI). In terms of biological role, catalyzes the hydrolysis of triacylglycerol. It also exhibits some esterase activity with p-nitrophenyl acetate and Tween 80 as substrates, however the lipase activity is approximately eight times the esterase activity. It shows a marked specificity for the 1,3-oleyl residues of triolein. This is Triacylglycerol lipase from Pseudomonas aeruginosa (strain ATCC 15692 / DSM 22644 / CIP 104116 / JCM 14847 / LMG 12228 / 1C / PRS 101 / PAO1).